Here is a 298-residue protein sequence, read N- to C-terminus: Probable endonuclease 4 (298 aa).

Zn(2+) contacts are provided by H69, H111, E146, D180, H183, H215, D228, H230, and E260.

It belongs to the AP endonuclease 2 family. Zn(2+) serves as cofactor.

The enzyme catalyses Endonucleolytic cleavage to 5'-phosphooligonucleotide end-products.. In terms of biological role, endonuclease IV plays a role in DNA repair. It cleaves phosphodiester bonds at apurinic or apyrimidinic (AP) sites, generating a 3'-hydroxyl group and a 5'-terminal sugar phosphate. This chain is Probable endonuclease 4, found in Bacillus cereus (strain G9842).